The chain runs to 339 residues: Homeobox protein Hox-D13 (339 aa).

The tract at residues 1 to 33 (MSRSGTWDMDGLRADGGAAGAAPASSSSSVAAP) is disordered. The segment covering 20 to 33 (GAAPASSSSSVAAP) has biased composition (low complexity). Positions 272–331 (GRKKRVPYTKLQLKELENEYAINKFINKDKRRRISAATNLSERQVTIWFQNRRVKDKKIV) form a DNA-binding region, homeobox.

It belongs to the Abd-B homeobox family.

It is found in the nucleus. Its function is as follows. Sequence-specific transcription factor that binds gene promoters and activates their transcription. Part of a developmental regulatory system that provides cells with specific positional identities on the anterior-posterior axis. This Mus musculus (Mouse) protein is Homeobox protein Hox-D13 (Hoxd13).